We begin with the raw amino-acid sequence, 165 residues long: uncharacterized protein (165 aa).

A disordered region spans residues 53 to 123; the sequence is CSEKTGSAPN…PAPSSGRQGG (71 aa). Positions 58–71 are enriched in low complexity; the sequence is GSAPNPGSSAPAPA.

This is an uncharacterized protein from Treponema pallidum (strain Nichols).